The chain runs to 239 residues: tRNA (guanine-N(1)-)-methyltransferase (239 aa).

S-adenosyl-L-methionine is bound by residues glycine 112 and leucine 131–leucine 136.

This sequence belongs to the RNA methyltransferase TrmD family. In terms of assembly, homodimer.

It localises to the cytoplasm. The enzyme catalyses guanosine(37) in tRNA + S-adenosyl-L-methionine = N(1)-methylguanosine(37) in tRNA + S-adenosyl-L-homocysteine + H(+). Its function is as follows. Specifically methylates guanosine-37 in various tRNAs. This chain is tRNA (guanine-N(1)-)-methyltransferase, found in Clostridium tetani (strain Massachusetts / E88).